Reading from the N-terminus, the 222-residue chain is Pyridoxine/pyridoxamine 5'-phosphate oxidase (222 aa).

Substrate is bound by residues 14-17 (RRNY) and Lys-71. FMN-binding positions include 66 to 71 (RTVLLK), 81 to 82 (FT), Arg-87, Lys-88, and Gln-110. Substrate-binding residues include Tyr-128, Arg-132, and Ser-136. Residues 145–146 (QS) and Trp-190 contribute to the FMN site. 196-198 (RLN) contacts substrate. Residue Arg-200 participates in FMN binding.

The protein belongs to the pyridoxamine 5'-phosphate oxidase family. Homodimer. It depends on FMN as a cofactor.

The enzyme catalyses pyridoxamine 5'-phosphate + O2 + H2O = pyridoxal 5'-phosphate + H2O2 + NH4(+). The catalysed reaction is pyridoxine 5'-phosphate + O2 = pyridoxal 5'-phosphate + H2O2. The protein operates within cofactor metabolism; pyridoxal 5'-phosphate salvage; pyridoxal 5'-phosphate from pyridoxamine 5'-phosphate: step 1/1. Its pathway is cofactor metabolism; pyridoxal 5'-phosphate salvage; pyridoxal 5'-phosphate from pyridoxine 5'-phosphate: step 1/1. Its function is as follows. Catalyzes the oxidation of either pyridoxine 5'-phosphate (PNP) or pyridoxamine 5'-phosphate (PMP) into pyridoxal 5'-phosphate (PLP). The chain is Pyridoxine/pyridoxamine 5'-phosphate oxidase from Prochlorococcus marinus (strain MIT 9303).